A 310-amino-acid polypeptide reads, in one-letter code: Ribosomal RNA small subunit methyltransferase H (310 aa).

Residues 32 to 34 (AGH), D52, F79, D100, and Q107 each bind S-adenosyl-L-methionine.

It belongs to the methyltransferase superfamily. RsmH family.

The protein localises to the cytoplasm. It carries out the reaction cytidine(1402) in 16S rRNA + S-adenosyl-L-methionine = N(4)-methylcytidine(1402) in 16S rRNA + S-adenosyl-L-homocysteine + H(+). In terms of biological role, specifically methylates the N4 position of cytidine in position 1402 (C1402) of 16S rRNA. In Bacillus pumilus (strain SAFR-032), this protein is Ribosomal RNA small subunit methyltransferase H.